Here is a 1248-residue protein sequence, read N- to C-terminus: ABC transporter B family member 7 (1248 aa).

A run of 6 helical transmembrane segments spans residues 32 to 52 (IVLM…QPFM), 82 to 102 (FLYL…CWMV), 158 to 175 (FTQL…AFIV), 179 to 201 (LTLA…TYIM), 261 to 281 (GLGI…AIWY), and 299 to 321 (VITS…NSFA). The region spanning 35 to 322 (MVIGTLSAMA…TLPSLNSFAA (288 aa)) is the ABC transmembrane type-1 1 domain. The ABC transporter 1 domain maps to 357-593 (IELRDVYFRY…PEGTYSQLVR (237 aa)). 392–399 (GQSGSGKS) lines the ATP pocket. Residues N473 and N652 are each glycosylated (N-linked (GlcNAc...) asparagine). Residues 682 to 702 (VLLLGSLAAVIHGIVFPVQGL) traverse the membrane as a helical segment. The ABC transmembrane type-1 2 domain maps to 683 to 970 (LLLGSLAAVI…TSTMAPDINK (288 aa)). N720 carries N-linked (GlcNAc...) asparagine glycosylation. Residues 722-742 (SLFWALIFVALGLTDLIVIPL) traverse the membrane as a helical segment. An N-linked (GlcNAc...) asparagine glycan is attached at N779. A run of 4 helical transmembrane segments spans residues 813–833 (IIGA…MALL), 834–854 (VAPV…GFGA), 914–934 (GSYL…SWLI), and 939–959 (ATFG…VGVT). Positions 1005 to 1242 (IELQHVSFRY…SGGAYASLVA (238 aa)) constitute an ABC transporter 2 domain. 1040-1047 (GESGSGKS) is an ATP binding site. Residues N1094, N1193, and N1244 are each glycosylated (N-linked (GlcNAc...) asparagine).

Belongs to the ABC transporter superfamily. ABCB family. Multidrug resistance exporter (TC 3.A.1.201) subfamily.

The protein resides in the membrane. In Arabidopsis thaliana (Mouse-ear cress), this protein is ABC transporter B family member 7 (ABCB7).